Consider the following 151-residue polypeptide: Minor curlin subunit (151 aa).

Positions 1–21 are cleaved as a signal peptide; that stretch reads MKNKLLFMMLTILGAPGIATA.

This sequence belongs to the CsgA/CsgB family.

It localises to the fimbrium. Functionally, curlin is the structural subunit of the curli. Curli are coiled surface structures that assemble preferentially at growth temperatures below 37 degrees Celsius. Curli can bind to fibronectin. The minor subunit is the nucleation component of curlin monomers. This chain is Minor curlin subunit (csgB), found in Salmonella typhi.